The following is a 238-amino-acid chain: Ubiquinone biosynthesis O-methyltransferase (238 aa).

Residues arginine 39, glycine 59, aspartate 80, and methionine 124 each contribute to the S-adenosyl-L-methionine site.

Belongs to the methyltransferase superfamily. UbiG/COQ3 family.

The catalysed reaction is a 3-demethylubiquinol + S-adenosyl-L-methionine = a ubiquinol + S-adenosyl-L-homocysteine + H(+). It catalyses the reaction a 3-(all-trans-polyprenyl)benzene-1,2-diol + S-adenosyl-L-methionine = a 2-methoxy-6-(all-trans-polyprenyl)phenol + S-adenosyl-L-homocysteine + H(+). The protein operates within cofactor biosynthesis; ubiquinone biosynthesis. O-methyltransferase that catalyzes the 2 O-methylation steps in the ubiquinone biosynthetic pathway. The protein is Ubiquinone biosynthesis O-methyltransferase of Aeromonas salmonicida (strain A449).